Here is a 216-residue protein sequence, read N- to C-terminus: Triosephosphate isomerase (216 aa).

7–9 (NLK) serves as a coordination point for substrate. H89 acts as the Electrophile in catalysis. Residue E137 is the Proton acceptor of the active site. Residues I142, G175, and 196-197 (AS) each bind substrate.

The protein belongs to the triosephosphate isomerase family. Homotetramer; dimer of dimers.

It is found in the cytoplasm. It catalyses the reaction D-glyceraldehyde 3-phosphate = dihydroxyacetone phosphate. It functions in the pathway carbohydrate biosynthesis; gluconeogenesis. The protein operates within carbohydrate degradation; glycolysis; D-glyceraldehyde 3-phosphate from glycerone phosphate: step 1/1. Involved in the gluconeogenesis. Catalyzes stereospecifically the conversion of dihydroxyacetone phosphate (DHAP) to D-glyceraldehyde-3-phosphate (G3P). The sequence is that of Triosephosphate isomerase from Thermoplasma acidophilum (strain ATCC 25905 / DSM 1728 / JCM 9062 / NBRC 15155 / AMRC-C165).